The primary structure comprises 183 residues: Cell division protein ZapC (183 aa).

It belongs to the ZapC family. In terms of assembly, interacts directly with FtsZ.

It localises to the cytoplasm. Contributes to the efficiency of the cell division process by stabilizing the polymeric form of the cell division protein FtsZ. Acts by promoting interactions between FtsZ protofilaments and suppressing the GTPase activity of FtsZ. In Xenorhabdus bovienii (strain SS-2004) (Xenorhabdus nematophila subsp. bovienii), this protein is Cell division protein ZapC.